The primary structure comprises 147 residues: Hemoglobin subunit beta (147 aa).

One can recognise a Globin domain in the interval 2–147 (ELTEAQRGAI…VVSALGKQYH (146 aa)). His-63 and His-92 together coordinate heme b.

The protein belongs to the globin family. In terms of assembly, heterotetramer of two alpha chains and two beta chains. In terms of tissue distribution, red blood cells.

In terms of biological role, involved in oxygen transport from gills to the various peripheral tissues. This is Hemoglobin subunit beta (hbb) from Electrophorus electricus (Electric eel).